A 195-amino-acid chain; its full sequence is Pyridoxal 5'-phosphate synthase subunit PdxT (195 aa).

53-55 contributes to the L-glutamine binding site; the sequence is GES. Cys82 (nucleophile) is an active-site residue. L-glutamine-binding positions include Arg108 and 134–135; that span reads IR. Catalysis depends on charge relay system residues His173 and Glu175.

It belongs to the glutaminase PdxT/SNO family. As to quaternary structure, in the presence of PdxS, forms a dodecamer of heterodimers. Only shows activity in the heterodimer.

It carries out the reaction aldehydo-D-ribose 5-phosphate + D-glyceraldehyde 3-phosphate + L-glutamine = pyridoxal 5'-phosphate + L-glutamate + phosphate + 3 H2O + H(+). The enzyme catalyses L-glutamine + H2O = L-glutamate + NH4(+). The protein operates within cofactor biosynthesis; pyridoxal 5'-phosphate biosynthesis. Functionally, catalyzes the hydrolysis of glutamine to glutamate and ammonia as part of the biosynthesis of pyridoxal 5'-phosphate. The resulting ammonia molecule is channeled to the active site of PdxS. The polypeptide is Pyridoxal 5'-phosphate synthase subunit PdxT (Methanobrevibacter smithii (strain ATCC 35061 / DSM 861 / OCM 144 / PS)).